Here is a 374-residue protein sequence, read N- to C-terminus: Homeobox protein knotted-1-like 13 (374 aa).

The disordered stretch occupies residues 214-242 (TGASPGEGTGATMSDGEDDQADSEANMYD). An ELK domain is found at 270 to 290 (ELKHELKQGYKEKLIDIREEI). The homeobox; TALE-type DNA-binding region spans 291–354 (LRKRRAGKLP…NQRKRNWHSN (64 aa)). Residues 347-374 (RKRNWHSNPSSSTSVKTKRKSNAGDNNS) are disordered.

The protein belongs to the TALE/KNOX homeobox family. As to expression, isoforms 1 and 2 are expressed in roots, stems, shoot meristem, leaf blades, leaf sheaths and flowers. Isoform 3 is expressed in stems, shoot meristem, rachis, leaf blades and leaf sheaths.

Its subcellular location is the nucleus. In terms of biological role, isoform 3 acts as a transcription activator, but isoforms 1 and 2 do not. This Oryza sativa subsp. japonica (Rice) protein is Homeobox protein knotted-1-like 13 (OSH45).